The primary structure comprises 238 residues: Proteasome subunit beta type-6 (238 aa).

Ala-2 is subject to N-acetylalanine. Positions 2–33 (AAALAVRRAGSAPAFGPEALTPDWENREVSTG) are cleaved as a propeptide — removed in mature form. The active-site Nucleophile is the Thr-34. Thr-68 bears the Phosphothreonine mark.

Belongs to the peptidase T1B family. The 26S proteasome consists of a 20S proteasome core and two 19S regulatory subunits. The 20S proteasome core is a barrel-shaped complex made of 28 subunits that are arranged in four stacked rings. The two outer rings are each formed by seven alpha subunits, and the two inner rings are formed by seven beta subunits. The proteolytic activity is exerted by three beta-subunits PSMB5, PSMB6 and PSMB7.

The protein localises to the cytoplasm. It localises to the nucleus. The catalysed reaction is Cleavage of peptide bonds with very broad specificity.. Functionally, component of the 20S core proteasome complex involved in the proteolytic degradation of most intracellular proteins. This complex plays numerous essential roles within the cell by associating with different regulatory particles. Associated with two 19S regulatory particles, forms the 26S proteasome and thus participates in the ATP-dependent degradation of ubiquitinated proteins. The 26S proteasome plays a key role in the maintenance of protein homeostasis by removing misfolded or damaged proteins that could impair cellular functions, and by removing proteins whose functions are no longer required. Associated with the PA200 or PA28, the 20S proteasome mediates ubiquitin-independent protein degradation. This type of proteolysis is required in several pathways including spermatogenesis (20S-PA200 complex) or generation of a subset of MHC class I-presented antigenic peptides (20S-PA28 complex). Within the 20S core complex, PSMB6 displays a peptidylglutamyl-hydrolyzing activity also termed postacidic or caspase-like activity, meaning that the peptides bond hydrolysis occurs directly after acidic residues. In Mus musculus (Mouse), this protein is Proteasome subunit beta type-6 (Psmb6).